The following is a 409-amino-acid chain: ATPase ASNA1 homolog (409 aa).

21-28 provides a ligand contact to ATP; that stretch reads KGGVGKTT. Residue aspartate 62 is part of the active site. 2 residues coordinate ATP: glutamate 303 and asparagine 330. Zn(2+) contacts are provided by cysteine 342 and cysteine 345.

This sequence belongs to the arsA ATPase family. Homodimer.

It localises to the cytoplasm. The protein resides in the endoplasmic reticulum. Functionally, ATPase required for the post-translational delivery of tail-anchored (TA) proteins to the endoplasmic reticulum. Recognizes and selectively binds the transmembrane domain of TA proteins in the cytosol. This complex then targets to the endoplasmic reticulum by membrane-bound receptors, where the tail-anchored protein is released for insertion. This process is regulated by ATP binding and hydrolysis. ATP binding drives the homodimer towards the closed dimer state, facilitating recognition of newly synthesized TA membrane proteins. ATP hydrolysis is required for insertion. Subsequently, the homodimer reverts towards the open dimer state, lowering its affinity for the membrane-bound receptor, and returning it to the cytosol to initiate a new round of targeting. The sequence is that of ATPase ASNA1 homolog from Leishmania major.